The following is a 513-amino-acid chain: Probable WRKY transcription factor 3 (513 aa).

Residues 1-11 (MAEKEEKEPSK) show a composition bias toward basic and acidic residues. Disordered stretches follow at residues 1 to 26 (MAEKEEKEPSKLKSSTGVSRPTISLP), 175 to 281 (NVHM…PACP), and 297 to 394 (IIYK…VASS). Residues 179 to 201 (QQSQQSEYPSSTQQQQQQQQQAS) show a composition bias toward low complexity. Over residues 202–228 (LTEIPSFSSAPRSQIRASVQETSQGQR) the composition is skewed to polar residues. Over residues 229–240 (ETSEISVFEHRS) the composition is skewed to basic and acidic residues. A DNA-binding region (WRKY 1) is located at residues 244–308 (NADKPADDGY…YKGQHNHELP (65 aa)). Composition is skewed to polar residues over residues 311 to 335 (RGNNNGSCKSSDIANQFQTSNSSLN) and 343 to 355 (TSQVTTTEQMSEA). Over residues 368-387 (VGERHEDEPDPKRRNTEVRV) the composition is skewed to basic and acidic residues. Positions 409–474 (SEVDLLDDGY…YEGKHNHDVP (66 aa)) form a DNA-binding region, WRKY 2.

As to expression, in young, mature and senescent leaves.

The protein localises to the nucleus. Transcription factor. Interacts specifically with the W box (5'-(T)TGAC[CT]-3'), a frequently occurring elicitor-responsive cis-acting element. This chain is Probable WRKY transcription factor 3 (WRKY3), found in Arabidopsis thaliana (Mouse-ear cress).